The following is a 170-amino-acid chain: Lipoprotein signal peptidase (170 aa).

A run of 3 helical transmembrane segments spans residues 9–29, 72–92, and 95–117; these read FNIF…KYLV, IFFI…ALKE, and CITR…DRLF. Active-site residues include Asp-124 and Asp-146. Residues 143 to 163 form a helical membrane-spanning segment; sequence NFADSYVVIGMILFLVYDFFI.

It belongs to the peptidase A8 family.

The protein resides in the cell inner membrane. It carries out the reaction Release of signal peptides from bacterial membrane prolipoproteins. Hydrolyzes -Xaa-Yaa-Zaa-|-(S,diacylglyceryl)Cys-, in which Xaa is hydrophobic (preferably Leu), and Yaa (Ala or Ser) and Zaa (Gly or Ala) have small, neutral side chains.. Its pathway is protein modification; lipoprotein biosynthesis (signal peptide cleavage). This protein specifically catalyzes the removal of signal peptides from prolipoproteins. In Borrelia garinii subsp. bavariensis (strain ATCC BAA-2496 / DSM 23469 / PBi) (Borreliella bavariensis), this protein is Lipoprotein signal peptidase.